Here is a 178-residue protein sequence, read N- to C-terminus: FANCD2 opposite strand protein (178 aa).

This is FANCD2 opposite strand protein (Fancd2os) from Mus musculus (Mouse).